Here is a 368-residue protein sequence, read N- to C-terminus: Glycoprotein UL18 (368 aa).

A signal peptide spans 1–18; that stretch reads MMTMWCLTLFVLWMLRVV. The segment at 19 to 114 is alpha-1-like; the sequence is GMHVLRYGYT…EIALGYRSQS (96 aa). 13 N-linked (GlcNAc...) asparagine; by host glycosylation sites follow: N56, N66, N74, N95, N123, N127, N150, N167, N177, N193, N240, N282, and N291. Positions 115–208 are alpha-2-like; sequence VLTWTHECNT…VIYSGFQPPV (94 aa). The segment at 209-303 is alpha-3-like; sequence THPVVKGGVR…VEIPISVTSP (95 aa). Residues 321-342 form a helical membrane-spanning segment; it reads YNTMTISSVLLALLLCALLFAF.

In terms of assembly, interacts with host LILRB1.

It localises to the host membrane. Functionally, plays a role in the protection against host NK cell cytotoxicity by interacting with and modulating the activity of the host inhibitory leukocyte Ig-like receptor 1/LILRB1, which is expressed on monocytes, dendritic cells, as well as subsets of T and NK cells. UL18 exerts an inhibitory effect on LIR-1+ NK cells, while it stimulates LIR-1- NK cell. These modulations prevent lysis of the infected cells by NK cells. The polypeptide is Glycoprotein UL18 (H301) (Homo sapiens (Human)).